A 557-amino-acid chain; its full sequence is Dihydroxy-acid dehydratase (557 aa).

Asp-78 is a Mg(2+) binding site. [2Fe-2S] cluster is bound at residue Cys-119. Mg(2+) is bound by residues Asp-120 and Lys-121. Lys-121 bears the N6-carboxylysine mark. Cys-192 is a [2Fe-2S] cluster binding site. Glu-446 is a Mg(2+) binding site. Ser-472 (proton acceptor) is an active-site residue.

It belongs to the IlvD/Edd family. In terms of assembly, homodimer. Requires [2Fe-2S] cluster as cofactor. The cofactor is Mg(2+).

It carries out the reaction (2R)-2,3-dihydroxy-3-methylbutanoate = 3-methyl-2-oxobutanoate + H2O. It catalyses the reaction (2R,3R)-2,3-dihydroxy-3-methylpentanoate = (S)-3-methyl-2-oxopentanoate + H2O. Its pathway is amino-acid biosynthesis; L-isoleucine biosynthesis; L-isoleucine from 2-oxobutanoate: step 3/4. It functions in the pathway amino-acid biosynthesis; L-valine biosynthesis; L-valine from pyruvate: step 3/4. Functionally, functions in the biosynthesis of branched-chain amino acids. Catalyzes the dehydration of (2R,3R)-2,3-dihydroxy-3-methylpentanoate (2,3-dihydroxy-3-methylvalerate) into 2-oxo-3-methylpentanoate (2-oxo-3-methylvalerate) and of (2R)-2,3-dihydroxy-3-methylbutanoate (2,3-dihydroxyisovalerate) into 2-oxo-3-methylbutanoate (2-oxoisovalerate), the penultimate precursor to L-isoleucine and L-valine, respectively. This Campylobacter fetus subsp. fetus (strain 82-40) protein is Dihydroxy-acid dehydratase.